We begin with the raw amino-acid sequence, 343 residues long: Anthranilate phosphoribosyltransferase (343 aa).

Residues Gly84, 87–88, Thr92, 94–97, 112–120, and Ser124 contribute to the 5-phospho-alpha-D-ribose 1-diphosphate site; these read GD, NIST, and KHGNRSVSS. Gly84 serves as a coordination point for anthranilate. Ser96 is a binding site for Mg(2+). Asn115 contributes to the anthranilate binding site. Arg170 is a binding site for anthranilate. Residues Asp229 and Glu230 each contribute to the Mg(2+) site.

Belongs to the anthranilate phosphoribosyltransferase family. As to quaternary structure, homodimer. Requires Mg(2+) as cofactor.

It catalyses the reaction N-(5-phospho-beta-D-ribosyl)anthranilate + diphosphate = 5-phospho-alpha-D-ribose 1-diphosphate + anthranilate. It participates in amino-acid biosynthesis; L-tryptophan biosynthesis; L-tryptophan from chorismate: step 2/5. Functionally, catalyzes the transfer of the phosphoribosyl group of 5-phosphorylribose-1-pyrophosphate (PRPP) to anthranilate to yield N-(5'-phosphoribosyl)-anthranilate (PRA). The sequence is that of Anthranilate phosphoribosyltransferase from Stenotrophomonas maltophilia (strain K279a).